Reading from the N-terminus, the 500-residue chain is Neuronal pentraxin receptor (500 aa).

The Cytoplasmic portion of the chain corresponds to Met-1–Lys-2. Residues Phe-3 to Ile-23 traverse the membrane as a helical; Signal-anchor for type II membrane protein segment. Residues Ala-24–Ala-500 lie on the Extracellular side of the membrane. Asn-42 carries an N-linked (GlcNAc...) asparagine glycan. The span at Asn-42–His-63 shows a compositional bias: low complexity. Disordered regions lie at residues Asn-42–Ser-81 and Glu-162–Pro-183. A glycan (N-linked (GlcNAc...) asparagine) is linked at Asn-216. Positions Asp-292–Cys-494 constitute a Pentraxin (PTX) domain. Cysteines 322 and 383 form a disulfide. Residues Asn-347, Glu-425, Gln-426, Asp-427, and Gln-437 each contribute to the Ca(2+) site. Asn-463 carries N-linked (GlcNAc...) asparagine glycosylation.

In terms of assembly, heteropentamer with NPTX1 and/or NPTX2. Also binds taipoxin-associated calcium-binding protein 49 (TCBP49/RCN2). Interacts with KLHL2. Requires Ca(2+) as cofactor. In terms of processing, ubiquitinated by a cullin-RING-based BCR (BTB-CUL3-RBX1) E3 ubiquitin-protein ligase complex containing KLHL2.

The protein localises to the membrane. Its function is as follows. May be involved in mediating uptake of synaptic material during synapse remodeling or in mediating the synaptic clustering of AMPA glutamate receptors at a subset of excitatory synapses. The protein is Neuronal pentraxin receptor (NPTXR) of Homo sapiens (Human).